A 155-amino-acid polypeptide reads, in one-letter code: Ribosomal RNA large subunit methyltransferase H (155 aa).

S-adenosyl-L-methionine-binding positions include leucine 72, glycine 103, and 122–127 (LSPLTL).

It belongs to the RNA methyltransferase RlmH family. As to quaternary structure, homodimer.

It localises to the cytoplasm. It carries out the reaction pseudouridine(1915) in 23S rRNA + S-adenosyl-L-methionine = N(3)-methylpseudouridine(1915) in 23S rRNA + S-adenosyl-L-homocysteine + H(+). In terms of biological role, specifically methylates the pseudouridine at position 1915 (m3Psi1915) in 23S rRNA. The polypeptide is Ribosomal RNA large subunit methyltransferase H (Actinobacillus pleuropneumoniae serotype 5b (strain L20)).